Consider the following 503-residue polypeptide: MKKSSKEISPSQSLKNGGSDHFFNTSLMYVLAACLASFIFGYQVSVLNTIKNFIVIEFGWCTGNKVECDDSTLKSSFLLASVFIGAVVGSGFSDYLVQHGRRFSLLVIYNFFILVSILTSITHHFHTILFSRLLSGFGVGLITVSVPMYISEMTHKDKKGAYGVLHQLFITFGILVAVLLGMAMGEAPDAKSVDALGEFQKIWWRLMFFFPCLISILGIVLLTFFYKEETPYYLFENGKIEESKKILKKIYGTDNVDEPLKAIKDAVEQNEAAKKNSISLMRAMQIPSYRNVILLGCILSGLQQFTGINVLVSNSNELYKEFLSNKLITTLSVIMTVVNFLMTFPAIYIVEKLGRKTLLLCGCAGVTLAAFLPTAIANQIDRSSDLVRNLSIAATFVMIISFAVSYGPVLWIYLHEMFPSEIKDSAASLASLVNWVCAIIVVFPSDIIIKKSPTILFFIFSGMSILSFLFIFFFIKETKGGEIGTSPYITMEERQKHMGKSAV.

The Cytoplasmic segment spans residues 1 to 26 (MKKSSKEISPSQSLKNGGSDHFFNTS). A helical membrane pass occupies residues 27-47 (LMYVLAACLASFIFGYQVSVL). Topologically, residues 48-76 (NTIKNFIVIEFGWCTGNKVECDDSTLKSS) are extracellular. A disulfide bridge links C61 with C68. A helical transmembrane segment spans residues 77–97 (FLLASVFIGAVVGSGFSDYLV). Residues 98–102 (QHGRR) are Cytoplasmic-facing. Residues 103-123 (FSLLVIYNFFILVSILTSITH) form a helical membrane-spanning segment. The Extracellular portion of the chain corresponds to 124-132 (HFHTILFSR). A helical membrane pass occupies residues 133–153 (LLSGFGVGLITVSVPMYISEM). At 154–163 (THKDKKGAYG) the chain is on the cytoplasmic side. The helical transmembrane segment at 164-184 (VLHQLFITFGILVAVLLGMAM) threads the bilayer. Alpha-D-glucose is bound at residue Q167. Residue Q167 participates in beta-D-glucose binding. Residues 185–205 (GEAPDAKSVDALGEFQKIWWR) lie on the Extracellular side of the membrane. Residues 206–226 (LMFFFPCLISILGIVLLTFFY) traverse the membrane as a helical segment. Residues 227–291 (KEETPYYLFE…RAMQIPSYRN (65 aa)) are Cytoplasmic-facing. The chain crosses the membrane as a helical span at residues 292–312 (VILLGCILSGLQQFTGINVLV). Positions 303, 304, and 309 each coordinate alpha-D-glucose. Q303 serves as a coordination point for beta-D-glucose. N309 contributes to the beta-D-glucose binding site. Topologically, residues 313–329 (SNSNELYKEFLSNKLIT) are extracellular. Residues 330 to 350 (TLSVIMTVVNFLMTFPAIYIV) traverse the membrane as a helical segment. N339 contributes to the beta-D-glucose binding site. Topologically, residues 351–356 (EKLGRK) are cytoplasmic. Residues 357–377 (TLLLCGCAGVTLAAFLPTAIA) traverse the membrane as a helical segment. The Extracellular portion of the chain corresponds to 378–391 (NQIDRSSDLVRNLS). A helical transmembrane segment spans residues 392-412 (IAATFVMIISFAVSYGPVLWI). W411 provides a ligand contact to alpha-D-glucose. At 413–428 (YLHEMFPSEIKDSAAS) the chain is on the cytoplasmic side. A helical transmembrane segment spans residues 429-449 (LASLVNWVCAIIVVFPSDIII). Over 450–454 (KKSPT) the chain is Extracellular. A helical membrane pass occupies residues 455 to 475 (ILFFIFSGMSILSFLFIFFFI). Topologically, residues 476 to 503 (KETKGGEIGTSPYITMEERQKHMGKSAV) are cytoplasmic.

The protein belongs to the major facilitator superfamily. Sugar transporter (TC 2.A.1.1) family. In terms of assembly, homodimer.

It is found in the cell membrane. The enzyme catalyses D-glucose(out) = D-glucose(in). It catalyses the reaction D-fructose(out) = D-fructose(in). It carries out the reaction D-galactose(in) = D-galactose(out). The catalysed reaction is D-mannose(out) = D-mannose(in). The enzyme catalyses D-glucosamine(out) = D-glucosamine(in). It catalyses the reaction D-xylose(out) = D-xylose(in). With respect to regulation, inhibited by compound 3361 (3-O-((undec-10-en)-1-yl)-D-glucose). Sodium-independent facilitative hexose transporter. Can transport D-glucose and D-fructose. Can transport D-mannose, D-galactose, D-xylose and D-glucosamine. This chain is Hexose transporter 1, found in Plasmodium vivax.